Here is a 302-residue protein sequence, read N- to C-terminus: Acetyl-coenzyme A carboxylase carboxyl transferase subunit beta (302 aa).

The CoA carboxyltransferase N-terminal domain maps to 25–294 (VWTKCDSCGQ…PHFDEAAPVS (270 aa)). Positions 29, 32, 48, and 51 each coordinate Zn(2+). Residues 29-51 (CDSCGQVLYRAELERNLEVCPKC) form a C4-type zinc finger. The tract at residues 281-302 (NQPQPHFDEAAPVSEQENQADA) is disordered.

The protein belongs to the AccD/PCCB family. In terms of assembly, acetyl-CoA carboxylase is a heterohexamer composed of biotin carboxyl carrier protein (AccB), biotin carboxylase (AccC) and two subunits each of ACCase subunit alpha (AccA) and ACCase subunit beta (AccD). It depends on Zn(2+) as a cofactor.

The protein localises to the cytoplasm. The catalysed reaction is N(6)-carboxybiotinyl-L-lysyl-[protein] + acetyl-CoA = N(6)-biotinyl-L-lysyl-[protein] + malonyl-CoA. Its pathway is lipid metabolism; malonyl-CoA biosynthesis; malonyl-CoA from acetyl-CoA: step 1/1. Component of the acetyl coenzyme A carboxylase (ACC) complex. Biotin carboxylase (BC) catalyzes the carboxylation of biotin on its carrier protein (BCCP) and then the CO(2) group is transferred by the transcarboxylase to acetyl-CoA to form malonyl-CoA. The sequence is that of Acetyl-coenzyme A carboxylase carboxyl transferase subunit beta from Serratia proteamaculans (strain 568).